The following is a 61-amino-acid chain: Small ribosomal subunit protein uS14B (61 aa).

The Zn(2+) site is built by Cys-24, Cys-27, Cys-40, and Cys-43.

Belongs to the universal ribosomal protein uS14 family. Zinc-binding uS14 subfamily. In terms of assembly, part of the 30S ribosomal subunit. Contacts proteins S3 and S10. Zn(2+) is required as a cofactor.

Functionally, binds 16S rRNA, required for the assembly of 30S particles and may also be responsible for determining the conformation of the 16S rRNA at the A site. The protein is Small ribosomal subunit protein uS14B of Staphylococcus epidermidis (strain ATCC 35984 / DSM 28319 / BCRC 17069 / CCUG 31568 / BM 3577 / RP62A).